Reading from the N-terminus, the 480-residue chain is Glutamyl-tRNA(Gln) amidotransferase subunit A (480 aa).

Active-site charge relay system residues include Lys76 and Ser151. Ser175 serves as the catalytic Acyl-ester intermediate.

The protein belongs to the amidase family. GatA subfamily. As to quaternary structure, heterotrimer of A, B and C subunits.

The catalysed reaction is L-glutamyl-tRNA(Gln) + L-glutamine + ATP + H2O = L-glutaminyl-tRNA(Gln) + L-glutamate + ADP + phosphate + H(+). In terms of biological role, allows the formation of correctly charged Gln-tRNA(Gln) through the transamidation of misacylated Glu-tRNA(Gln) in organisms which lack glutaminyl-tRNA synthetase. The reaction takes place in the presence of glutamine and ATP through an activated gamma-phospho-Glu-tRNA(Gln). This chain is Glutamyl-tRNA(Gln) amidotransferase subunit A, found in Exiguobacterium sibiricum (strain DSM 17290 / CCUG 55495 / CIP 109462 / JCM 13490 / 255-15).